Reading from the N-terminus, the 190-residue chain is uncharacterized protein (190 aa).

4 consecutive transmembrane segments (helical) span residues 15–35, 58–78, 94–114, and 148–168; these read LVMSCSVTLLFSSSLSFVLAI, FSSFFFFFTTSPDSSPVGVLI, FFSASSLYSSIDLGSILYFAF, and FLFFVGSSKAFLTCSSLSFFV.

It localises to the membrane. This is an uncharacterized protein from Saccharomyces cerevisiae (strain ATCC 204508 / S288c) (Baker's yeast).